Here is a 189-residue protein sequence, read N- to C-terminus: ATP synthase subunit delta (189 aa).

This sequence belongs to the ATPase delta chain family. F-type ATPases have 2 components, F(1) - the catalytic core - and F(0) - the membrane proton channel. F(1) has five subunits: alpha(3), beta(3), gamma(1), delta(1), epsilon(1). F(0) has three main subunits: a(1), b(2) and c(10-14). The alpha and beta chains form an alternating ring which encloses part of the gamma chain. F(1) is attached to F(0) by a central stalk formed by the gamma and epsilon chains, while a peripheral stalk is formed by the delta and b chains.

Its subcellular location is the cell inner membrane. Its function is as follows. F(1)F(0) ATP synthase produces ATP from ADP in the presence of a proton or sodium gradient. F-type ATPases consist of two structural domains, F(1) containing the extramembraneous catalytic core and F(0) containing the membrane proton channel, linked together by a central stalk and a peripheral stalk. During catalysis, ATP synthesis in the catalytic domain of F(1) is coupled via a rotary mechanism of the central stalk subunits to proton translocation. This protein is part of the stalk that links CF(0) to CF(1). It either transmits conformational changes from CF(0) to CF(1) or is implicated in proton conduction. The protein is ATP synthase subunit delta of Methylorubrum extorquens (strain PA1) (Methylobacterium extorquens).